A 344-amino-acid polypeptide reads, in one-letter code: MRVDLFDFDLPPENIALRPASPRDSARMLLVEGSEGALADRHVSDLPGLLRVGDCLVFNDTRVIPAQLEGRRGEARIGATLHKREGLRQWRAFVRNAKRVRTGDRIDFGAGVSAIAAERGEDGSILLDFEGDEPVELLLERAGTMPLPPYIAGKRPTDDRDRDDYQTMFAREKGAVAAPTAALHFTPRLMEALAAAGIASETLTLHVGAGTFLPVKADDTDDHRMHAEWGRIDAATADHLNAIRAAGGRVIAVGTTSLRLLESATGEDGVIRPFDGDTAIFITPGYRFRAIDGLMTNFHLPKSTLFMLVSALMGRDRMQAAYAHAIAEGYRFYSYGDSSLLLPG.

This sequence belongs to the QueA family. In terms of assembly, monomer.

Its subcellular location is the cytoplasm. The catalysed reaction is 7-aminomethyl-7-carbaguanosine(34) in tRNA + S-adenosyl-L-methionine = epoxyqueuosine(34) in tRNA + adenine + L-methionine + 2 H(+). Its pathway is tRNA modification; tRNA-queuosine biosynthesis. Functionally, transfers and isomerizes the ribose moiety from AdoMet to the 7-aminomethyl group of 7-deazaguanine (preQ1-tRNA) to give epoxyqueuosine (oQ-tRNA). The sequence is that of S-adenosylmethionine:tRNA ribosyltransferase-isomerase from Rhizorhabdus wittichii (strain DSM 6014 / CCUG 31198 / JCM 15750 / NBRC 105917 / EY 4224 / RW1) (Sphingomonas wittichii).